The primary structure comprises 122 residues: Large ribosomal subunit protein uL14c (122 aa).

Belongs to the universal ribosomal protein uL14 family. As to quaternary structure, part of the 50S ribosomal subunit.

The protein localises to the plastid. It is found in the chloroplast. Functionally, binds to 23S rRNA. The polypeptide is Large ribosomal subunit protein uL14c (Marchantia polymorpha (Common liverwort)).